We begin with the raw amino-acid sequence, 190 residues long: Probable nicotinate-nucleotide adenylyltransferase (190 aa).

Belongs to the NadD family.

The enzyme catalyses nicotinate beta-D-ribonucleotide + ATP + H(+) = deamido-NAD(+) + diphosphate. Its pathway is cofactor biosynthesis; NAD(+) biosynthesis; deamido-NAD(+) from nicotinate D-ribonucleotide: step 1/1. Functionally, catalyzes the reversible adenylation of nicotinate mononucleotide (NaMN) to nicotinic acid adenine dinucleotide (NaAD). This Azobacteroides pseudotrichonymphae genomovar. CFP2 protein is Probable nicotinate-nucleotide adenylyltransferase.